We begin with the raw amino-acid sequence, 393 residues long: Riboflavin biosynthesis protein RibBA (393 aa).

The interval 1–200 (MQFDTIELAI…IKSLVAFRKA (200 aa)) is DHBP synthase. D-ribulose 5-phosphate is bound by residues 27-28 (RE), Asp32, 139-143 (RNGHT), and Glu163. Residue Glu28 coordinates Mg(2+). His142 contacts Mg(2+). Residues 201-393 (VELNVNLKAK…TKKNKMGHLI (193 aa)) form a GTP cyclohydrolase II region. 249 to 253 (RMHSA) contacts GTP. Cys254, Cys265, and Cys267 together coordinate Zn(2+). GTP contacts are provided by residues Gln270, 291–293 (EGR), and Thr313. The active-site Proton acceptor; for GTP cyclohydrolase activity is Asp325. Arg327 acts as the Nucleophile; for GTP cyclohydrolase activity in catalysis. Positions 348 and 353 each coordinate GTP.

It in the N-terminal section; belongs to the DHBP synthase family. The protein in the C-terminal section; belongs to the GTP cyclohydrolase II family. The cofactor is Mg(2+). Requires Mn(2+) as cofactor. It depends on Zn(2+) as a cofactor.

It catalyses the reaction D-ribulose 5-phosphate = (2S)-2-hydroxy-3-oxobutyl phosphate + formate + H(+). The enzyme catalyses GTP + 4 H2O = 2,5-diamino-6-hydroxy-4-(5-phosphoribosylamino)-pyrimidine + formate + 2 phosphate + 3 H(+). The protein operates within cofactor biosynthesis; riboflavin biosynthesis; 2-hydroxy-3-oxobutyl phosphate from D-ribulose 5-phosphate: step 1/1. It functions in the pathway cofactor biosynthesis; riboflavin biosynthesis; 5-amino-6-(D-ribitylamino)uracil from GTP: step 1/4. Functionally, catalyzes the conversion of D-ribulose 5-phosphate to formate and 3,4-dihydroxy-2-butanone 4-phosphate. In terms of biological role, catalyzes the conversion of GTP to 2,5-diamino-6-ribosylamino-4(3H)-pyrimidinone 5'-phosphate (DARP), formate and pyrophosphate. The polypeptide is Riboflavin biosynthesis protein RibBA (Staphylococcus epidermidis (strain ATCC 12228 / FDA PCI 1200)).